The chain runs to 553 residues: Glutamyl-tRNA(Gln) amidotransferase subunit B, mitochondrial (553 aa).

Residues 1 to 18 (MAASTSGYSGVLFRLRKY) constitute a mitochondrion transit peptide.

This sequence belongs to the GatB/GatE family. GatB subfamily. Subunit of the heterotrimeric GatCAB amidotransferase (AdT) complex, composed of A (qrsl1), B (gatb) and C (gatc) subunits.

Its subcellular location is the mitochondrion. It carries out the reaction L-glutamyl-tRNA(Gln) + L-glutamine + ATP + H2O = L-glutaminyl-tRNA(Gln) + L-glutamate + ADP + phosphate + H(+). Allows the formation of correctly charged Gln-tRNA(Gln) through the transamidation of misacylated Glu-tRNA(Gln) in the mitochondria. The reaction takes place in the presence of glutamine and ATP through an activated gamma-phospho-Glu-tRNA(Gln). The protein is Glutamyl-tRNA(Gln) amidotransferase subunit B, mitochondrial of Danio rerio (Zebrafish).